The primary structure comprises 97 residues: MPTSHGERSCTRYKLKKTVRERGLSPISKAIQDFEEGQMVHIDIDPSVQKGMPNAKFQGKTGKVLGKRGRAYLLQVTDGNSKKEVISLSQHLKPQKY.

The protein belongs to the eukaryotic ribosomal protein eL21 family.

The sequence is that of Large ribosomal subunit protein eL21 from Methanococcoides burtonii (strain DSM 6242 / NBRC 107633 / OCM 468 / ACE-M).